Here is a 581-residue protein sequence, read N- to C-terminus: NADH-quinone oxidoreductase subunit C/D (581 aa).

Residues 1-172 (MSGAELISDL…PPFVMTAARF (172 aa)) form an NADH dehydrogenase I subunit C region. The interval 196–581 (ELMILNYGPH…IDYVMSDVDR (386 aa)) is NADH dehydrogenase I subunit D.

In the N-terminal section; belongs to the complex I 30 kDa subunit family. The protein in the C-terminal section; belongs to the complex I 49 kDa subunit family. NDH-1 is composed of 13 different subunits. Subunits NuoB, CD, E, F, and G constitute the peripheral sector of the complex.

It is found in the cell inner membrane. It carries out the reaction a quinone + NADH + 5 H(+)(in) = a quinol + NAD(+) + 4 H(+)(out). NDH-1 shuttles electrons from NADH, via FMN and iron-sulfur (Fe-S) centers, to quinones in the respiratory chain. The immediate electron acceptor for the enzyme in this species is believed to be ubiquinone. Couples the redox reaction to proton translocation (for every two electrons transferred, four hydrogen ions are translocated across the cytoplasmic membrane), and thus conserves the redox energy in a proton gradient. This Rhodopseudomonas palustris (strain BisA53) protein is NADH-quinone oxidoreductase subunit C/D.